Here is a 527-residue protein sequence, read N- to C-terminus: GMP synthase [glutamine-hydrolyzing] (527 aa).

Residues 4–202 (KILILDFGSQ…VLKICGAQPD (199 aa)) form the Glutamine amidotransferase type-1 domain. Residue C81 is the Nucleophile of the active site. Active-site residues include H176 and E178. A GMPS ATP-PPase domain is found at 203 to 395 (WEMGHYIDEA…LGLPPAMVYR (193 aa)). Residue 230–236 (SGGVDSS) participates in ATP binding.

As to quaternary structure, homodimer.

The enzyme catalyses XMP + L-glutamine + ATP + H2O = GMP + L-glutamate + AMP + diphosphate + 2 H(+). Its pathway is purine metabolism; GMP biosynthesis; GMP from XMP (L-Gln route): step 1/1. Functionally, catalyzes the synthesis of GMP from XMP. In Paraburkholderia xenovorans (strain LB400), this protein is GMP synthase [glutamine-hydrolyzing].